The sequence spans 81 residues: MSSGCLLLLLGLLTLWAELTPVSGRPRLCELPAESGLCNAYIPSFYYNPHSHKCQKFMYGGCGGNANNFKTIVECHRTCVG.

An N-terminal signal peptide occupies residues 1 to 24; the sequence is MSSGCLLLLLGLLTLWAELTPVSG. The region spanning 29-79 is the BPTI/Kunitz inhibitor domain; that stretch reads CELPAESGLCNAYIPSFYYNPHSHKCQKFMYGGCGGNANNFKTIVECHRTC. 3 cysteine pairs are disulfide-bonded: Cys-29–Cys-79, Cys-38–Cys-62, and Cys-54–Cys-75.

Belongs to the venom Kunitz-type family. As to expression, expressed by the venom gland.

The protein localises to the secreted. Its function is as follows. Snake venom serine protease inhibitor. This is Protease inhibitor 3 from Walterinnesia aegyptia (Desert black snake).